The following is a 480-amino-acid chain: Aspartyl/glutamyl-tRNA(Asn/Gln) amidotransferase subunit B (480 aa).

It belongs to the GatB/GatE family. GatB subfamily. Heterotrimer of A, B and C subunits.

The enzyme catalyses L-glutamyl-tRNA(Gln) + L-glutamine + ATP + H2O = L-glutaminyl-tRNA(Gln) + L-glutamate + ADP + phosphate + H(+). It carries out the reaction L-aspartyl-tRNA(Asn) + L-glutamine + ATP + H2O = L-asparaginyl-tRNA(Asn) + L-glutamate + ADP + phosphate + 2 H(+). In terms of biological role, allows the formation of correctly charged Asn-tRNA(Asn) or Gln-tRNA(Gln) through the transamidation of misacylated Asp-tRNA(Asn) or Glu-tRNA(Gln) in organisms which lack either or both of asparaginyl-tRNA or glutaminyl-tRNA synthetases. The reaction takes place in the presence of glutamine and ATP through an activated phospho-Asp-tRNA(Asn) or phospho-Glu-tRNA(Gln). The polypeptide is Aspartyl/glutamyl-tRNA(Asn/Gln) amidotransferase subunit B (Streptococcus thermophilus (strain ATCC BAA-250 / LMG 18311)).